The primary structure comprises 476 residues: Small ribosomal subunit protein mS29 (476 aa).

A mitochondrion-targeting transit peptide spans 1-54 (MLPKFRSRSSIIKNTERISNILSGGKLTVCGSKLGGLYTFEKCTFNKYYSSSQY). The tract at residues 58–97 (GRPVGGNIHSSSNQQRQKNSEAPRINEIPPSTSSVEKSTT) is disordered. 2 stretches are compositionally biased toward polar residues: residues 65–74 (IHSSSNQQRQ) and 86–97 (PPSTSSVEKSTT). 200–207 (GAPGSGRS) is a binding site for ATP.

Belongs to the mitochondrion-specific ribosomal protein mS29 family. In terms of assembly, component of the mitochondrial small ribosomal subunit (mt-SSU). Mature yeast 74S mitochondrial ribosomes consist of a small (37S) and a large (54S) subunit. The 37S small subunit contains a 15S ribosomal RNA (15S mt-rRNA) and at least 32 different proteins. The 54S large subunit contains a 21S rRNA (21S mt-rRNA) and at least 45 different proteins.

It is found in the mitochondrion. Its function is as follows. Component of the mitochondrial ribosome (mitoribosome), a dedicated translation machinery responsible for the synthesis of mitochondrial genome-encoded proteins, including at least some of the essential transmembrane subunits of the mitochondrial respiratory chain. The mitoribosomes are attached to the mitochondrial inner membrane and translation products are cotranslationally integrated into the membrane. mS29 binds GTP and is probably an active GTPase. GTP hydrolysis may be linked to subunit association. mS29 also has an extraribosomal function, being required for maintenance of mitochondrial DNA. The chain is Small ribosomal subunit protein mS29 (rsm23) from Schizosaccharomyces pombe (strain 972 / ATCC 24843) (Fission yeast).